We begin with the raw amino-acid sequence, 76 residues long: Putative snRNP Sm-like protein (76 aa).

A Sm domain is found at 4-76 (RPLDVIHKSL…VLAISPTEEG (73 aa)).

This sequence belongs to the snRNP Sm proteins family.

The sequence is that of Putative snRNP Sm-like protein from Pyrococcus furiosus (strain ATCC 43587 / DSM 3638 / JCM 8422 / Vc1).